Consider the following 163-residue polypeptide: Cyanate hydratase (163 aa).

Residues R103, E106, and S129 contribute to the active site.

It belongs to the cyanase family.

It catalyses the reaction cyanate + hydrogencarbonate + 3 H(+) = NH4(+) + 2 CO2. In terms of biological role, catalyzes the reaction of cyanate with bicarbonate to produce ammonia and carbon dioxide. The chain is Cyanate hydratase from Ajellomyces dermatitidis (strain ER-3 / ATCC MYA-2586) (Blastomyces dermatitidis).